Reading from the N-terminus, the 347-residue chain is GMP reductase (347 aa).

108 to 131 (ADFEKTKQILDLNPALNFVCIDVA) serves as a coordination point for NADP(+). K(+)-binding residues include G181 and G183. C186 acts as the Thioimidate intermediate in catalysis. Residue 216–239 (IVSDGGCTTPGDVAKAFGGGADFV) participates in NADP(+) binding.

It belongs to the IMPDH/GMPR family. GuaC type 1 subfamily. As to quaternary structure, homotetramer.

It carries out the reaction IMP + NH4(+) + NADP(+) = GMP + NADPH + 2 H(+). In terms of biological role, catalyzes the irreversible NADPH-dependent deamination of GMP to IMP. It functions in the conversion of nucleobase, nucleoside and nucleotide derivatives of G to A nucleotides, and in maintaining the intracellular balance of A and G nucleotides. This chain is GMP reductase, found in Escherichia coli O127:H6 (strain E2348/69 / EPEC).